The sequence spans 1336 residues: DNA-directed RNA polymerase subunit beta' (1336 aa).

4 residues coordinate Zn(2+): Cys60, Cys62, Cys75, and Cys78. Mg(2+)-binding residues include Asp535, Asp537, and Asp539. Zn(2+)-binding residues include Cys902, Cys984, Cys991, and Cys994.

The protein belongs to the RNA polymerase beta' chain family. In terms of assembly, the RNAP catalytic core consists of 2 alpha, 1 beta, 1 beta' and 1 omega subunit. When a sigma factor is associated with the core the holoenzyme is formed, which can initiate transcription. Mg(2+) serves as cofactor. It depends on Zn(2+) as a cofactor.

The enzyme catalyses RNA(n) + a ribonucleoside 5'-triphosphate = RNA(n+1) + diphosphate. Its function is as follows. DNA-dependent RNA polymerase catalyzes the transcription of DNA into RNA using the four ribonucleoside triphosphates as substrates. The polypeptide is DNA-directed RNA polymerase subunit beta' (Corynebacterium diphtheriae (strain ATCC 700971 / NCTC 13129 / Biotype gravis)).